A 625-amino-acid polypeptide reads, in one-letter code: Folylpolyglutamate synthase (625 aa).

141–144 provides a ligand contact to ATP; that stretch reads GKGS. The Mg(2+) site is built by S165, E234, and H262. Residues R384 and D414 each coordinate ATP.

The protein belongs to the folylpolyglutamate synthase family. A monovalent cation is required as a cofactor.

Its subcellular location is the mitochondrion inner membrane. The protein localises to the mitochondrion matrix. The catalysed reaction is (6S)-5,6,7,8-tetrahydrofolyl-(gamma-L-Glu)(n) + L-glutamate + ATP = (6S)-5,6,7,8-tetrahydrofolyl-(gamma-L-Glu)(n+1) + ADP + phosphate + H(+). The protein operates within cofactor biosynthesis; tetrahydrofolylpolyglutamate biosynthesis. Functionally, catalyzes conversion of folates to polyglutamate derivatives allowing concentration of folate compounds in the cell and the intracellular retention of these cofactors, which are important substrates for most of the folate-dependent enzymes that are involved in one-carbon transfer reactions involved in purine, pyrimidine and amino acid synthesis. Essential for organellar and whole-plant folate homeostasis. This Arabidopsis thaliana (Mouse-ear cress) protein is Folylpolyglutamate synthase.